We begin with the raw amino-acid sequence, 161 residues long: Endoribonuclease YbeY (161 aa).

Residues H121, H125, and H131 each coordinate Zn(2+).

It belongs to the endoribonuclease YbeY family. It depends on Zn(2+) as a cofactor.

It is found in the cytoplasm. In terms of biological role, single strand-specific metallo-endoribonuclease involved in late-stage 70S ribosome quality control and in maturation of the 3' terminus of the 16S rRNA. This chain is Endoribonuclease YbeY, found in Stenotrophomonas maltophilia (strain K279a).